The sequence spans 139 residues: GSK3-beta interaction protein (139 aa).

Residues 1–22 are disordered; the sequence is METDCNPMELSSMSGFEEGSEL. Residues 41 to 45 are required for PRKAR2A interaction; contributes to a protective effect against H(2)O(2)-induced apoptosis; it reads VNDVL. The interval 115–139 is interaction with GSK3B and acts as a GSK3B inhibitor; the sequence is SPAYREAFGNALLQRLEALKRDGQS.

The protein belongs to the GSKIP family. In terms of assembly, forms a complex composed of PRKAR2A or PRKAR2B, GSK3B and GSKIP through GSKIP interaction; facilitates PKA-induced phosphorylation of GSK3B leading to GSK3B inactivation; recruits DNM1L through GSK3B for PKA-mediated phosphorylation of DNM1L; promotes beta-catenin degradation through GSK3B-induced phosphorylation of beta-catenin; stabilizes beta-catenin and enhances Wnt-induced signaling through PKA-induced phosphorylation of beta-catenin. Interacts with GSK3B; induces GSK3B-mediated phosphorylation of GSKIP and inhibits GSK3B kinase activity. Post-translationally, phosphorylated by GSK3B.

The protein localises to the cytoplasm. It localises to the nucleus. In terms of biological role, A-kinase anchoring protein for GSK3B and PKA that regulates or facilitates their kinase activity towards their targets. The ternary complex enhances Wnt-induced signaling by facilitating the GSK3B- and PKA-induced phosphorylation of beta-catenin leading to beta-catenin degradation and stabilization respectively. Upon cAMP activation, the ternary complex contributes to neuroprotection against oxidative stress-induced apoptosis by facilitating the PKA-induced phosphorylation of DML1 and PKA-induced inactivation of GSK3B. During neurite outgrowth promotes neuron proliferation; while increases beta-catenin-induced transcriptional activity through GSK3B kinase activity inhibition, reduces N-cadherin level to promote cell cycle progression. May play a role in cleft palate formation and is required for postnatal life through modulation of the activity of GSK3B during development. This Macaca fascicularis (Crab-eating macaque) protein is GSK3-beta interaction protein.